A 474-amino-acid chain; its full sequence is tRNA-2-methylthio-N(6)-dimethylallyladenosine synthase (474 aa).

The region spanning 3–120 (KKLLIKTWGC…LPEMIRQSQS (118 aa)) is the MTTase N-terminal domain. 6 residues coordinate [4Fe-4S] cluster: Cys12, Cys49, Cys83, Cys157, Cys161, and Cys164. The Radical SAM core domain occupies 143–375 (KAEGATAFVS…QQQVNSQAMR (233 aa)). Residues 378–441 (RLMLDTEQRV…ANSLRGELVR (64 aa)) form the TRAM domain.

Belongs to the methylthiotransferase family. MiaB subfamily. Monomer. Requires [4Fe-4S] cluster as cofactor.

The protein localises to the cytoplasm. The catalysed reaction is N(6)-dimethylallyladenosine(37) in tRNA + (sulfur carrier)-SH + AH2 + 2 S-adenosyl-L-methionine = 2-methylsulfanyl-N(6)-dimethylallyladenosine(37) in tRNA + (sulfur carrier)-H + 5'-deoxyadenosine + L-methionine + A + S-adenosyl-L-homocysteine + 2 H(+). Its function is as follows. Catalyzes the methylthiolation of N6-(dimethylallyl)adenosine (i(6)A), leading to the formation of 2-methylthio-N6-(dimethylallyl)adenosine (ms(2)i(6)A) at position 37 in tRNAs that read codons beginning with uridine. In Aliivibrio fischeri (strain ATCC 700601 / ES114) (Vibrio fischeri), this protein is tRNA-2-methylthio-N(6)-dimethylallyladenosine synthase.